The following is a 395-amino-acid chain: Putative ankyrin repeat protein RF_0950 (395 aa).

ANK repeat units follow at residues 3-32 (YQKE…NPNT), 36-65 (YGKL…DPNA), 69-98 (IKDP…NPNV), 101-130 (RHEN…DPNQ), 134-166 (NGNT…EKAL), 172-201 (NGET…TVNI), and 205-234 (AGNT…ELNE). Residues 272 to 395 (KTKLIYQGGD…YLKVPILKEK (124 aa)) enclose the Glutamine amidotransferase type-1 domain. The active-site Nucleophile is the Cys377.

The sequence is that of Putative ankyrin repeat protein RF_0950 from Rickettsia felis (strain ATCC VR-1525 / URRWXCal2) (Rickettsia azadi).